Consider the following 249-residue polypeptide: uncharacterized protein (249 aa).

The protein belongs to the HAD-like hydrolase superfamily. CbbY/CbbZ/Gph/YieH family.

This is an uncharacterized protein from Schizosaccharomyces pombe (strain 972 / ATCC 24843) (Fission yeast).